A 420-amino-acid polypeptide reads, in one-letter code: L-rhamnose isomerase (420 aa).

Histidine 262, aspartate 294, and aspartate 296 together coordinate Mn(2+).

This sequence belongs to the rhamnose isomerase family. Homotetramer. The cofactor is Mn(2+).

Its subcellular location is the cytoplasm. It carries out the reaction L-rhamnopyranose = L-rhamnulose. Its pathway is carbohydrate degradation; L-rhamnose degradation; glycerone phosphate from L-rhamnose: step 1/3. In terms of biological role, catalyzes the interconversion of L-rhamnose and L-rhamnulose. The protein is L-rhamnose isomerase of Pectobacterium carotovorum subsp. carotovorum (strain PC1).